The sequence spans 652 residues: DNA ligase (652 aa).

NAD(+)-binding positions include 29 to 33 (DSDYD), 78 to 79 (SL), and Glu-107. Residue Lys-109 is the N6-AMP-lysine intermediate of the active site. Residues Arg-130, Glu-164, Lys-278, and Lys-302 each contribute to the NAD(+) site. Positions 395, 398, 413, and 418 each coordinate Zn(2+). The BRCT domain occupies 577–652 (NSDAALFGLT…IEDEDWLRQL (76 aa)).

Belongs to the NAD-dependent DNA ligase family. LigA subfamily. Requires Mg(2+) as cofactor. Mn(2+) serves as cofactor.

The enzyme catalyses NAD(+) + (deoxyribonucleotide)n-3'-hydroxyl + 5'-phospho-(deoxyribonucleotide)m = (deoxyribonucleotide)n+m + AMP + beta-nicotinamide D-nucleotide.. In terms of biological role, DNA ligase that catalyzes the formation of phosphodiester linkages between 5'-phosphoryl and 3'-hydroxyl groups in double-stranded DNA using NAD as a coenzyme and as the energy source for the reaction. It is essential for DNA replication and repair of damaged DNA. The sequence is that of DNA ligase from Streptococcus pyogenes serotype M3 (strain ATCC BAA-595 / MGAS315).